The primary structure comprises 194 residues: Cation channel sperm-associated auxiliary subunit zeta (194 aa).

In terms of assembly, component of the CatSper complex or CatSpermasome composed of the core pore-forming members CATSPER1, CATSPER2, CATSPER3 and CATSPER4 as well as auxiliary members CATSPERB, CATSPERG2, CATSPERD, CATSPERE, CATSPERZ, C2CD6/CATSPERT, SLCO6C1, TMEM249, TMEM262 and EFCAB9. HSPA1 may be an additional auxiliary complex member. The core complex members CATSPER1, CATSPER2, CATSPER3 and CATSPER4 form a heterotetrameric channel. The auxiliary CATSPERB, CATSPERG2, CATSPERD and CATSPERE subunits form a pavilion-like structure over the pore which stabilizes the complex through interactions with CATSPER4, CATSPER3, CATSPER1 and CATSPER2 respectively. SLCO6C1 interacts with CATSPERE and TMEM262/CATSPERH interacts with CATSPERB, further stabilizing the complex. C2CD6/CATSPERT interacts at least with CATSPERD and is required for targeting the CatSper complex in the flagellar membrane. Interacts with EFCAB9; the interaction is direct, Ca(2+)-dependent and connects EFCAB9 with the CatSper complex. Dissociates from EFCAB9 at elevated pH. As to expression, testis-specific. Expressed in adult but not in fetal testis. Not expressed in ovary. Within testis, expression is restricted to spermatids.

The protein localises to the cell projection. Its subcellular location is the cilium. The protein resides in the flagellum membrane. In terms of biological role, auxiliary component of the CatSper complex, a complex involved in sperm cell hyperactivation. Sperm cell hyperactivation is needed for sperm motility which is essential late in the preparation of sperm for fertilization. Required for a distribution of the CatSper complex in linear quadrilateral nanodomains along the flagellum, maximizing fertilization inside the mammalian female reproductive tract. Together with EFCAB9, associates with the CatSper channel pore and is required for the two-row structure of each single CatSper channel. This is Cation channel sperm-associated auxiliary subunit zeta from Mus musculus (Mouse).